The primary structure comprises 249 residues: Ribosomal RNA small subunit methyltransferase J (249 aa).

Residues R101–D102, E117–R118, and D171 contribute to the S-adenosyl-L-methionine site.

It belongs to the methyltransferase superfamily. RsmJ family.

The protein localises to the cytoplasm. The catalysed reaction is guanosine(1516) in 16S rRNA + S-adenosyl-L-methionine = N(2)-methylguanosine(1516) in 16S rRNA + S-adenosyl-L-homocysteine + H(+). Functionally, specifically methylates the guanosine in position 1516 of 16S rRNA. This is Ribosomal RNA small subunit methyltransferase J from Tolumonas auensis (strain DSM 9187 / NBRC 110442 / TA 4).